The following is a 318-amino-acid chain: Ribosomal RNA small subunit methyltransferase H (318 aa).

Residues 37–39, Asp-56, Tyr-83, Asp-104, and Gln-111 contribute to the S-adenosyl-L-methionine site; that span reads GGH. Residues 293-318 are disordered; the sequence is EEEIAENRRAAPARLRGAQRIREDAE.

It belongs to the methyltransferase superfamily. RsmH family.

The protein localises to the cytoplasm. The catalysed reaction is cytidine(1402) in 16S rRNA + S-adenosyl-L-methionine = N(4)-methylcytidine(1402) in 16S rRNA + S-adenosyl-L-homocysteine + H(+). Specifically methylates the N4 position of cytidine in position 1402 (C1402) of 16S rRNA. This Streptomyces avermitilis (strain ATCC 31267 / DSM 46492 / JCM 5070 / NBRC 14893 / NCIMB 12804 / NRRL 8165 / MA-4680) protein is Ribosomal RNA small subunit methyltransferase H.